Here is a 219-residue protein sequence, read N- to C-terminus: MTQDELKKAVGWAALQYVQPGTIVGVGTGSTAAHFIDALGTMKGQIEGAVSSSDASTEKLKSLGIHVFDLNEVDSLGIYVDGADEINGHMQMIKGGGAALTREKIIASVAEKFICIADASKQVDILGKFPLPVEVIPMARSAVARQLVKLGGRPEYRQGVVTDNGNVILDVHGMEILDPIAMENAINAIPGVVTVGLFANRGADVALIGTPDGVKTIVK.

Substrate contacts are provided by residues 28-31 (TGST), 81-84 (DGAD), and 94-97 (KGGG). E103 (proton acceptor) is an active-site residue. K121 contributes to the substrate binding site.

Belongs to the ribose 5-phosphate isomerase family. In terms of assembly, homodimer.

The catalysed reaction is aldehydo-D-ribose 5-phosphate = D-ribulose 5-phosphate. It functions in the pathway carbohydrate degradation; pentose phosphate pathway; D-ribose 5-phosphate from D-ribulose 5-phosphate (non-oxidative stage): step 1/1. In terms of biological role, catalyzes the reversible conversion of ribose-5-phosphate to ribulose 5-phosphate. The protein is Ribose-5-phosphate isomerase A of Shigella boydii serotype 18 (strain CDC 3083-94 / BS512).